The sequence spans 101 residues: Small ribosomal subunit protein uS10 (101 aa).

The protein belongs to the universal ribosomal protein uS10 family. In terms of assembly, part of the 30S ribosomal subunit.

In terms of biological role, involved in the binding of tRNA to the ribosomes. The polypeptide is Small ribosomal subunit protein uS10 (Porphyromonas gingivalis (strain ATCC 33277 / DSM 20709 / CIP 103683 / JCM 12257 / NCTC 11834 / 2561)).